The chain runs to 348 residues: Dihydroorotase (348 aa).

2 residues coordinate Zn(2+): His-17 and His-19. Substrate contacts are provided by residues 19–21 (HLR) and Asn-45. Residues Lys-103, His-140, and His-178 each coordinate Zn(2+). Lys-103 carries the post-translational modification N6-carboxylysine. His-140 provides a ligand contact to substrate. Residue Leu-223 participates in substrate binding. Zn(2+) is bound at residue Asp-251. Asp-251 is an active-site residue. Residues His-255 and Ala-267 each contribute to the substrate site.

Belongs to the metallo-dependent hydrolases superfamily. DHOase family. Class II DHOase subfamily. In terms of assembly, homodimer. Requires Zn(2+) as cofactor.

The catalysed reaction is (S)-dihydroorotate + H2O = N-carbamoyl-L-aspartate + H(+). Its pathway is pyrimidine metabolism; UMP biosynthesis via de novo pathway; (S)-dihydroorotate from bicarbonate: step 3/3. Catalyzes the reversible cyclization of carbamoyl aspartate to dihydroorotate. The polypeptide is Dihydroorotase (Serratia proteamaculans (strain 568)).